The chain runs to 218 residues: Ribosomal RNA large subunit methyltransferase E (218 aa).

Residues Gly-64, Trp-66, Asp-92, Asp-108, and Asp-133 each coordinate S-adenosyl-L-methionine. Lys-173 (proton acceptor) is an active-site residue.

This sequence belongs to the class I-like SAM-binding methyltransferase superfamily. RNA methyltransferase RlmE family.

The protein resides in the cytoplasm. The catalysed reaction is uridine(2552) in 23S rRNA + S-adenosyl-L-methionine = 2'-O-methyluridine(2552) in 23S rRNA + S-adenosyl-L-homocysteine + H(+). Specifically methylates the uridine in position 2552 of 23S rRNA at the 2'-O position of the ribose in the fully assembled 50S ribosomal subunit. This chain is Ribosomal RNA large subunit methyltransferase E, found in Paracidovorax citrulli (strain AAC00-1) (Acidovorax citrulli).